The chain runs to 206 residues: Small ribosomal subunit protein uS4 (206 aa).

The S4 RNA-binding domain maps to 96 to 156 (GRLDNVVYRM…EKSKKQARIK (61 aa)).

It belongs to the universal ribosomal protein uS4 family. As to quaternary structure, part of the 30S ribosomal subunit. Contacts protein S5. The interaction surface between S4 and S5 is involved in control of translational fidelity.

One of the primary rRNA binding proteins, it binds directly to 16S rRNA where it nucleates assembly of the body of the 30S subunit. Functionally, with S5 and S12 plays an important role in translational accuracy. The protein is Small ribosomal subunit protein uS4 of Actinobacillus succinogenes (strain ATCC 55618 / DSM 22257 / CCUG 43843 / 130Z).